The sequence spans 369 residues: Phosphatidylglycerol--prolipoprotein diacylglyceryl transferase (369 aa).

The next 3 membrane-spanning stretches (helical) occupy residues 26–46 (YYGILYATGILVAIIAGILTL), 60–80 (YVFIGIISIIFGARTWSFIIG), and 97–117 (LAIQGGVIFTITTGLIFFFFI). A 1,2-diacyl-sn-glycero-3-phospho-(1'-sn-glycerol) is bound at residue R167. 2 consecutive transmembrane segments (helical) span residues 216 to 236 (VPIFLIESFFNVIAFIIIVFL) and 273 to 293 (FVTSIVTSVLFLLGGSIGFIF).

It belongs to the Lgt family.

It localises to the cell membrane. The catalysed reaction is L-cysteinyl-[prolipoprotein] + a 1,2-diacyl-sn-glycero-3-phospho-(1'-sn-glycerol) = an S-1,2-diacyl-sn-glyceryl-L-cysteinyl-[prolipoprotein] + sn-glycerol 1-phosphate + H(+). Its pathway is protein modification; lipoprotein biosynthesis (diacylglyceryl transfer). In terms of biological role, catalyzes the transfer of the diacylglyceryl group from phosphatidylglycerol to the sulfhydryl group of the N-terminal cysteine of a prolipoprotein, the first step in the formation of mature lipoproteins. The polypeptide is Phosphatidylglycerol--prolipoprotein diacylglyceryl transferase (Mycoplasmoides gallisepticum (strain R(low / passage 15 / clone 2)) (Mycoplasma gallisepticum)).